The chain runs to 477 residues: Cysteine--tRNA ligase (477 aa).

Residue cysteine 29 coordinates Zn(2+). Residues proline 31 to asparagine 41 carry the 'HIGH' region motif. Cysteine 224, histidine 249, and glutamate 253 together coordinate Zn(2+). The short motif at lysine 282–serine 286 is the 'KMSKS' region element. Position 285 (lysine 285) interacts with ATP.

This sequence belongs to the class-I aminoacyl-tRNA synthetase family. Monomer. Zn(2+) is required as a cofactor.

It localises to the cytoplasm. The catalysed reaction is tRNA(Cys) + L-cysteine + ATP = L-cysteinyl-tRNA(Cys) + AMP + diphosphate. In Nitrobacter winogradskyi (strain ATCC 25391 / DSM 10237 / CIP 104748 / NCIMB 11846 / Nb-255), this protein is Cysteine--tRNA ligase.